The following is a 431-amino-acid chain: MSLMTKLGFRALVASCLITAGSAANAQVNVLITGVGSTQFPIATANFTNEANLPQQVTSIVRADLARSGKFTNIDAGSTPVPETASVDLGAWKAKGANAFVAGSVNRDANGQYKVNFILYDTVKQQSLGGLSLTATDTTLRTAGHKIADYIYQKLLGVRGVFATRLSYVIKTGNRYQLQISDSDGQNARIALSSTEPIISPAWSPSSTKVAYVSFERKKPIVYIHDLPTGRRYMVSDQKGNNSAPAWSPDSNTLAVALSLTGNTQIYTVNANGGGLRRLTQSSSIDTEPFYSPDGRWIYFTSDRGGAPQIYRMPAQGESAGAAQRVTFTGSYNTSPRVSPDGKLLAYISRTGGGFKLYVQDLQTGAANAITNTNRDESPSFAANGQYVLYATQSGGRNVLAAVPSDGSAPPQILSVQGGSVREPSWGPFMQ.

Positions 1–26 (MSLMTKLGFRALVASCLITAGSAANA) are cleaved as a signal peptide. Positions 406–431 (DGSAPPQILSVQGGSVREPSWGPFMQ) are disordered.

Belongs to the TolB family. In terms of assembly, the Tol-Pal system is composed of five core proteins: the inner membrane proteins TolA, TolQ and TolR, the periplasmic protein TolB and the outer membrane protein Pal. They form a network linking the inner and outer membranes and the peptidoglycan layer.

Its subcellular location is the periplasm. Part of the Tol-Pal system, which plays a role in outer membrane invagination during cell division and is important for maintaining outer membrane integrity. This chain is Tol-Pal system protein TolB, found in Burkholderia orbicola (strain AU 1054).